The following is a 372-amino-acid chain: Dual-specificity RNA methyltransferase RlmN (372 aa).

E92 functions as the Proton acceptor in the catalytic mechanism. The Radical SAM core domain maps to 98–337 (ETDRATLCVS…VILRKTRGDD (240 aa)). A disulfide bridge connects residues C105 and C342. [4Fe-4S] cluster contacts are provided by C112, C116, and C119. Residues 166-167 (GE), S198, 220-222 (SLH), and N299 contribute to the S-adenosyl-L-methionine site. C342 (S-methylcysteine intermediate) is an active-site residue.

This sequence belongs to the radical SAM superfamily. RlmN family. It depends on [4Fe-4S] cluster as a cofactor.

Its subcellular location is the cytoplasm. The enzyme catalyses adenosine(2503) in 23S rRNA + 2 reduced [2Fe-2S]-[ferredoxin] + 2 S-adenosyl-L-methionine = 2-methyladenosine(2503) in 23S rRNA + 5'-deoxyadenosine + L-methionine + 2 oxidized [2Fe-2S]-[ferredoxin] + S-adenosyl-L-homocysteine. It carries out the reaction adenosine(37) in tRNA + 2 reduced [2Fe-2S]-[ferredoxin] + 2 S-adenosyl-L-methionine = 2-methyladenosine(37) in tRNA + 5'-deoxyadenosine + L-methionine + 2 oxidized [2Fe-2S]-[ferredoxin] + S-adenosyl-L-homocysteine. Specifically methylates position 2 of adenine 2503 in 23S rRNA and position 2 of adenine 37 in tRNAs. m2A2503 modification seems to play a crucial role in the proofreading step occurring at the peptidyl transferase center and thus would serve to optimize ribosomal fidelity. This is Dual-specificity RNA methyltransferase RlmN from Histophilus somni (strain 129Pt) (Haemophilus somnus).